The sequence spans 337 residues: Anthraniloyl-CoA anthraniloyltransferase (337 aa).

Positions 29 and 33 each coordinate anthraniloyl-CoA. The active-site Acyl-thioester intermediate is Cys-113. Anthraniloyl-CoA-binding positions include 154–155, 221–224, and His-258; these read RN and MRGR.

The protein belongs to the thiolase-like superfamily. FabH family. Homodimer.

It localises to the cytoplasm. It catalyses the reaction anthraniloyl-CoA + malonyl-CoA + H(+) = (2-aminobenzoyl)acetyl-CoA + CO2 + CoA. Its function is as follows. Required for the biosynthesis of a number of signaling molecules, such as the quinolone signal 2-heptyl-3-hydroxy-4(1H)-quinolone (PQS), 2-heptyl-4-hydroxyquinoline (HHQ) and 2,4-dihydroxyquinoline (DHQ). These molecules are required for normal biofilm formation. Catalyzes the transfer of the anthraniloyl moiety from anthraniloyl-CoA to malonyl-CoA to form 2-aminobenzoylacetyl-CoA. The first step of the reaction is the formation of a covalent anthraniloyl-PqsD intermediate. Next, the short-lived intermediate 3-(2-aminophenyl)-3-oxopropanoyl-CoA is formed. An intramolecular rearrangement of this intermediate can give rise to 2,4-dihydroxyquinoline (DHQ). This Pseudomonas aeruginosa (strain ATCC 15692 / DSM 22644 / CIP 104116 / JCM 14847 / LMG 12228 / 1C / PRS 101 / PAO1) protein is Anthraniloyl-CoA anthraniloyltransferase (pqsD).